A 332-amino-acid polypeptide reads, in one-letter code: Alanine racemase (332 aa).

Lys-33 acts as the Proton acceptor; specific for D-alanine in catalysis. Lys-33 bears the N6-(pyridoxal phosphate)lysine mark. Arg-115 serves as a coordination point for substrate. Tyr-245 acts as the Proton acceptor; specific for L-alanine in catalysis. Met-286 is a substrate binding site.

Belongs to the alanine racemase family. It depends on pyridoxal 5'-phosphate as a cofactor.

It carries out the reaction L-alanine = D-alanine. It participates in amino-acid biosynthesis; D-alanine biosynthesis; D-alanine from L-alanine: step 1/1. Catalyzes the interconversion of L-alanine and D-alanine. May also act on other amino acids. The sequence is that of Alanine racemase (alr) from Nitratiruptor sp. (strain SB155-2).